We begin with the raw amino-acid sequence, 467 residues long: 6-phospho-beta-galactosidase (467 aa).

The D-galactose 6-phosphate site is built by Gln19, His116, Asn159, Glu160, and Asn297. Glu160 serves as the catalytic Proton donor. Catalysis depends on Glu375, which acts as the Nucleophile. The D-galactose 6-phosphate site is built by Ser428, Trp429, Lys435, and Tyr437.

It belongs to the glycosyl hydrolase 1 family.

The enzyme catalyses a 6-phospho-beta-D-galactoside + H2O = D-galactose 6-phosphate + an alcohol. It participates in carbohydrate metabolism; lactose degradation; D-galactose 6-phosphate and beta-D-glucose from lactose 6-phosphate: step 1/1. Its activity is regulated as follows. Inhibited by both galactose-6-phosphate and ATP. This chain is 6-phospho-beta-galactosidase, found in Leptotrichia buccalis (strain ATCC 14201 / DSM 1135 / JCM 12969 / NCTC 10249 / C-1013-b).